A 634-amino-acid chain; its full sequence is SPARC-like protein 1 (634 aa).

Residues 1–16 (MKAVLLLLYALGIAAA) form the signal peptide. The tract at residues 50–335 (ADIEKHPNHK…DDSKHGASDD (286 aa)) is disordered. The span at 51-62 (DIEKHPNHKAEK) shows a compositional bias: basic and acidic residues. A phosphoserine mark is found at Ser-68, Ser-76, and Ser-84. Positions 73–83 (HEQSTEQDKTY) are enriched in basic and acidic residues. Acidic residues predominate over residues 89–99 (LKDEEDGDGDL). Positions 131-144 (TVSTPFVDSDQPAN) are enriched in polar residues. Asn-144 is a glycosylation site (N-linked (GlcNAc...) asparagine). Residues Ser-151 and Ser-159 each carry the phosphoserine modification. 2 stretches are compositionally biased toward acidic residues: residues 189-198 (EKEEEEDPED) and 205-214 (NQEEEKEPPE). The segment covering 233-258 (QESSQPTQISKTKNDFEQGSQGQEGD) has biased composition (polar residues). Residue Ser-259 is modified to Phosphoserine. Basic and acidic residues-rich tracts occupy residues 263 to 276 (GEDK…HLPH) and 292 to 303 (GNRKDTDEEKAV). Ser-333 and Ser-340 each carry phosphoserine. The disordered stretch occupies residues 360–398 (EETPDESENRSEAGDNQGAKKAESSPNAEPSDEGNSRGH). Positions 366–382 (SENRSEAGDNQGAKKAE) are enriched in basic and acidic residues. N-linked (GlcNAc...) asparagine glycosylation is present at Asn-368. Phosphoserine occurs at positions 370 and 390. A Follistatin-like domain is found at 402-424 (SCMNFQCKRGHTCKTDQHGKPHC). 7 cysteine pairs are disulfide-bonded: Cys-403–Cys-414, Cys-408–Cys-424, Cys-426–Cys-460, Cys-432–Cys-453, Cys-442–Cys-479, Cys-485–Cys-596, and Cys-604–Cys-620. Residues 420–481 (GKPHCVCQDP…QLDYFGACKS (62 aa)) enclose the Kazal-like domain. The N-linked (GlcNAc...) asparagine glycan is linked to Asn-446. An EF-hand domain is found at 592 to 627 (PMEHCITRFFEECDPNKDKHITLKEWGHCFGIKEED). The Ca(2+) site is built by Asp-605, Asn-607, Asp-609, His-611, and Glu-616.

Belongs to the SPARC family. Expressed in many types of neurons in the brain.

It is found in the secreted. Its subcellular location is the extracellular space. It localises to the extracellular matrix. The chain is SPARC-like protein 1 (Sparcl1) from Rattus norvegicus (Rat).